The primary structure comprises 262 residues: tRNA pseudouridine synthase A (262 aa).

D51 functions as the Nucleophile in the catalytic mechanism. Y109 lines the substrate pocket.

This sequence belongs to the tRNA pseudouridine synthase TruA family. As to quaternary structure, homodimer.

The catalysed reaction is uridine(38/39/40) in tRNA = pseudouridine(38/39/40) in tRNA. In terms of biological role, formation of pseudouridine at positions 38, 39 and 40 in the anticodon stem and loop of transfer RNAs. In Aliivibrio salmonicida (strain LFI1238) (Vibrio salmonicida (strain LFI1238)), this protein is tRNA pseudouridine synthase A.